The chain runs to 76 residues: Small ribosomal subunit protein bS18 (76 aa).

Belongs to the bacterial ribosomal protein bS18 family. As to quaternary structure, part of the 30S ribosomal subunit. Forms a tight heterodimer with protein bS6.

Binds as a heterodimer with protein bS6 to the central domain of the 16S rRNA, where it helps stabilize the platform of the 30S subunit. The polypeptide is Small ribosomal subunit protein bS18 (Aeromonas salmonicida (strain A449)).